Reading from the N-terminus, the 189-residue chain is MIIIISGPPGSGKTSVAIKLANELSYKFISAGKIFRDIAQKMGLDIINLNKVAESNFDIDKMVDKKIFEFILSEKNLIIESHIAGWLFREYTNIAIYLWAPLKIRANRIAIRDKISYDQAISQIIKREYMHYKRFNKFYGIDINDLSVFDLVINTSNVDVNNIVKLILTYLSSVSQNPQPLKEKDINDK.

ATP is bound at residue 7–15 (GPPGSGKTS).

Belongs to the cytidylate kinase family. Type 2 subfamily.

It localises to the cytoplasm. It carries out the reaction CMP + ATP = CDP + ADP. The enzyme catalyses dCMP + ATP = dCDP + ADP. This is Cytidylate kinase from Saccharolobus islandicus (strain L.S.2.15 / Lassen #1) (Sulfolobus islandicus).